Here is a 752-residue protein sequence, read N- to C-terminus: Photosystem I P700 chlorophyll a apoprotein A1 (752 aa).

The next 8 membrane-spanning stretches (helical) occupy residues 73 to 96 (IFSA…FHGA), 159 to 182 (LYAT…FHYH), 198 to 222 (MNHH…HISI), 294 to 312 (TAHH…GHMY), 349 to 372 (WHAQ…HHMY), 388 to 414 (LSLF…IFMV), 436 to 458 (AIIS…LYIH), and 533 to 551 (FMVH…LILV). [4Fe-4S] cluster contacts are provided by cysteine 575 and cysteine 584. The next 2 membrane-spanning stretches (helical) occupy residues 591 to 612 (HVFL…HFSW) and 666 to 688 (LSAY…MFLF). A chlorophyll a'-binding site is contributed by histidine 677. 2 residues coordinate chlorophyll a: methionine 685 and tyrosine 693. Phylloquinone is bound at residue tryptophan 694. The helical transmembrane segment at 726–746 (AVGVAHYLLGGIGTTWAFFLA) threads the bilayer.

It belongs to the PsaA/PsaB family. As to quaternary structure, the PsaA/B heterodimer binds the P700 chlorophyll special pair and subsequent electron acceptors. PSI consists of a core antenna complex that captures photons, and an electron transfer chain that converts photonic excitation into a charge separation. The eukaryotic PSI reaction center is composed of at least 11 subunits. P700 is a chlorophyll a/chlorophyll a' dimer, A0 is one or more chlorophyll a, A1 is one or both phylloquinones and FX is a shared 4Fe-4S iron-sulfur center. serves as cofactor.

Its subcellular location is the plastid. The protein localises to the chloroplast thylakoid membrane. The catalysed reaction is reduced [plastocyanin] + hnu + oxidized [2Fe-2S]-[ferredoxin] = oxidized [plastocyanin] + reduced [2Fe-2S]-[ferredoxin]. PsaA and PsaB bind P700, the primary electron donor of photosystem I (PSI), as well as the electron acceptors A0, A1 and FX. PSI is a plastocyanin/cytochrome c6-ferredoxin oxidoreductase, converting photonic excitation into a charge separation, which transfers an electron from the donor P700 chlorophyll pair to the spectroscopically characterized acceptors A0, A1, FX, FA and FB in turn. Oxidized P700 is reduced on the lumenal side of the thylakoid membrane by plastocyanin or cytochrome c6. The polypeptide is Photosystem I P700 chlorophyll a apoprotein A1 (Gracilaria tenuistipitata var. liui (Red alga)).